The primary structure comprises 77 residues: Probable Fe(2+)-trafficking protein (77 aa).

This sequence belongs to the Fe(2+)-trafficking protein family.

Could be a mediator in iron transactions between iron acquisition and iron-requiring processes, such as synthesis and/or repair of Fe-S clusters in biosynthetic enzymes. The sequence is that of Probable Fe(2+)-trafficking protein from Baumannia cicadellinicola subsp. Homalodisca coagulata.